We begin with the raw amino-acid sequence, 694 residues long: Zinc finger BED domain-containing protein 5 (694 aa).

A BED-type zinc finger spans residues 109-165; sequence RKYDESYLSFGFTYFGNRDAPHAQCVLCKKILSNSSLAPSKLRRHLETKHAAYKDKD. 4 residues coordinate Zn(2+): C133, C136, H153, and H158.

The protein is Zinc finger BED domain-containing protein 5 (ZBED5) of Canis lupus familiaris (Dog).